A 513-amino-acid polypeptide reads, in one-letter code: Alpha-amylase mde5 (513 aa).

An N-terminal signal peptide occupies residues 1–25 (MKHNEVFGWTLKVLSFLLVVIPANA). Cysteine 52 and cysteine 60 are disulfide-bonded. Position 105 (tryptophan 105) interacts with substrate. Asparagine 143 is a binding site for Ca(2+). Histidine 144 serves as a coordination point for substrate. The N-linked (GlcNAc...) asparagine glycan is linked to asparagine 162. An intrachain disulfide couples cysteine 171 to cysteine 184. Ca(2+)-binding residues include glutamate 182 and aspartate 195. Position 224 (arginine 224) interacts with substrate. Positions 226, 230, and 250 each coordinate Ca(2+). Aspartate 226 serves as the catalytic Nucleophile. 229–230 (KH) provides a ligand contact to substrate. Glutamate 250 acts as the Proton donor in catalysis. Substrate is bound at residue glycine 254. Cysteine 260 and cysteine 304 are joined by a disulfide. Aspartate 318 contacts substrate. An N-linked (GlcNAc...) asparagine glycan is attached at asparagine 357. Position 365 (arginine 365) interacts with substrate. Cysteine 454 and cysteine 488 are joined by a disulfide.

Belongs to the glycosyl hydrolase 13 family. It depends on Ca(2+) as a cofactor.

It is found in the endoplasmic reticulum. The catalysed reaction is Endohydrolysis of (1-&gt;4)-alpha-D-glucosidic linkages in polysaccharides containing three or more (1-&gt;4)-alpha-linked D-glucose units.. This chain is Alpha-amylase mde5 (mde5), found in Schizosaccharomyces pombe (strain 972 / ATCC 24843) (Fission yeast).